Consider the following 348-residue polypeptide: (+)-germacrene D synthase (348 aa).

Asp-97, Asp-101, Asn-242, and Ser-246 together coordinate Mg(2+). A DDXXD motif motif is present at residues 97–101; sequence DDILD.

This sequence belongs to the terpene synthase family. Mg(2+) serves as cofactor.

It carries out the reaction (2E,6E)-farnesyl diphosphate = (+)-germacrene D + diphosphate. Its pathway is secondary metabolite biosynthesis; terpenoid biosynthesis. Sesquiterpene synthase converting farnesyl diphosphate to eight sesquiterpenes, with (+)-germacrene D and an unidentified oxygenated sesquiterpene as the major products. Has no diterpene synthase activity. The chain is (+)-germacrene D synthase from Selaginella moellendorffii (Spikemoss).